Consider the following 630-residue polypeptide: Pentatricopeptide repeat-containing protein At1g62670, mitochondrial (630 aa).

A mitochondrion-targeting transit peptide spans 1–22; the sequence is MRISFAIASTAKRFVHRSLVVR. PPR repeat units lie at residues 44–79, 80–114, 115–149, 150–184, 185–219, 220–254, 255–289, 290–324, 325–359, 360–394, 395–429, 430–464, 465–499, 500–534, 535–569, and 570–604; these read TSYDYREKLSRNGLSELKLDDAVALFGEMVKSRPFP, SIIEFSKLLSAIAKMNKFDVVISLGEQMQNLGIPH, NHYTYSILINCFCRRSQLPLALAVLGKMMKLGYEP, NIVTLSSLLNGYCHSKRISEAVALVDQMFVTGYQP, NTVTFNTLIHGLFLHNKASEAMALIDRMVAKGCQP, DLVTYGVVVNGLCKRGDTDLAFNLLNKMEQGKLEP, GVLIYNTIIDGLCKYKHMDDALNLFKEMETKGIRP, NVVTYSSLISCLCNYGRWSDASRLLSDMIERKINP, DVFTFSALIDAFVKEGKLVEAEKLYDEMVKRSIDP, SIVTYSSLINGFCMHDRLDEAKQMFEFMVSKHCFP, DVVTYNTLIKGFCKYKRVEEGMEVFREMSQRGLVG, NTVTYNILIQGLFQAGDCDMAQEIFKEMVSDGVPP, NIMTYNTLLDGLCKNGKLEKAMVVFEYLQRSKMEP, TIYTYNIMIEGMCKAGKVEDGWDLFCNLSLKGVKP, DVVAYNTMISGFCRKGSKEEADALFKEMKEDGTLP, and NSGCYNTLIRARLRDGDREASAELIKEMRSCGFAG.

It belongs to the PPR family. P subfamily.

The protein resides in the mitochondrion. The sequence is that of Pentatricopeptide repeat-containing protein At1g62670, mitochondrial from Arabidopsis thaliana (Mouse-ear cress).